We begin with the raw amino-acid sequence, 297 residues long: Protoheme IX farnesyltransferase 1 (297 aa).

9 consecutive transmembrane segments (helical) span residues Val-23 to Val-43, Trp-45 to Val-65, Leu-93 to Phe-113, Leu-117 to Leu-137, Ile-145 to Gly-165, Pro-171 to Ile-191, Leu-216 to His-236, Leu-241 to Tyr-261, and Ile-277 to Leu-297.

It belongs to the UbiA prenyltransferase family. Protoheme IX farnesyltransferase subfamily.

It localises to the cell inner membrane. It catalyses the reaction heme b + (2E,6E)-farnesyl diphosphate + H2O = Fe(II)-heme o + diphosphate. It participates in porphyrin-containing compound metabolism; heme O biosynthesis; heme O from protoheme: step 1/1. Converts heme B (protoheme IX) to heme O by substitution of the vinyl group on carbon 2 of heme B porphyrin ring with a hydroxyethyl farnesyl side group. This Pseudomonas putida (strain ATCC 47054 / DSM 6125 / CFBP 8728 / NCIMB 11950 / KT2440) protein is Protoheme IX farnesyltransferase 1.